A 750-amino-acid chain; its full sequence is Photosystem I P700 chlorophyll a apoprotein A1 (750 aa).

8 consecutive transmembrane segments (helical) span residues 70-93 (VFSA…FHGA), 156-179 (LYCT…FHYH), 195-219 (LNHH…HVSL), 291-309 (TVHH…GHMY), 346-369 (WHAQ…HHMY), 385-411 (LSLF…IFMV), 433-455 (AIIS…LYIH), and 531-549 (FLVH…LILL). Positions 573 and 582 each coordinate [4Fe-4S] cluster. The next 2 membrane-spanning stretches (helical) occupy residues 589–610 (HVFL…HFSW) and 664–686 (LSAY…MFLF). Residue H675 coordinates chlorophyll a'. M683 and Y691 together coordinate chlorophyll a. Residue W692 participates in phylloquinone binding. A helical transmembrane segment spans residues 724–744 (AVGVAHYLLGGIATTWAFFLA).

The protein belongs to the PsaA/PsaB family. In terms of assembly, the PsaA/B heterodimer binds the P700 chlorophyll special pair and subsequent electron acceptors. PSI consists of a core antenna complex that captures photons, and an electron transfer chain that converts photonic excitation into a charge separation. The eukaryotic PSI reaction center is composed of at least 11 subunits. It depends on P700 is a chlorophyll a/chlorophyll a' dimer, A0 is one or more chlorophyll a, A1 is one or both phylloquinones and FX is a shared 4Fe-4S iron-sulfur center. as a cofactor.

It is found in the plastid. It localises to the chloroplast thylakoid membrane. It catalyses the reaction reduced [plastocyanin] + hnu + oxidized [2Fe-2S]-[ferredoxin] = oxidized [plastocyanin] + reduced [2Fe-2S]-[ferredoxin]. In terms of biological role, psaA and PsaB bind P700, the primary electron donor of photosystem I (PSI), as well as the electron acceptors A0, A1 and FX. PSI is a plastocyanin-ferredoxin oxidoreductase, converting photonic excitation into a charge separation, which transfers an electron from the donor P700 chlorophyll pair to the spectroscopically characterized acceptors A0, A1, FX, FA and FB in turn. Oxidized P700 is reduced on the lumenal side of the thylakoid membrane by plastocyanin. This is Photosystem I P700 chlorophyll a apoprotein A1 from Psilotum nudum (Whisk fern).